The chain runs to 59 residues: Protein translocase subunit SecE (59 aa).

The chain crosses the membrane as a helical span at residues isoleucine 30–isoleucine 50.

This sequence belongs to the SecE/SEC61-gamma family. As to quaternary structure, component of the Sec protein translocase complex. Heterotrimer consisting of SecY, SecE and SecG subunits. The heterotrimers can form oligomers, although 1 heterotrimer is thought to be able to translocate proteins. Interacts with the ribosome. Interacts with SecDF, and other proteins may be involved. Interacts with SecA.

It is found in the cell membrane. Functionally, essential subunit of the Sec protein translocation channel SecYEG. Clamps together the 2 halves of SecY. May contact the channel plug during translocation. This is Protein translocase subunit SecE from Bacillus subtilis (strain 168).